Reading from the N-terminus, the 916-residue chain is Protein translocase subunit SecA (916 aa).

ATP is bound by residues Gln-87, 105–109 (GEGKT), and Asp-512. A disordered region spans residues 857–916 (QHAEAPSMEQAVAGEEEELPEGPAPVVPLEPVRNEQKIGRNEPCPCGSGKKYKHCHGQLD). Zn(2+)-binding residues include Cys-900, Cys-902, Cys-911, and His-912. A compositionally biased stretch (basic residues) spans 906–916 (KKYKHCHGQLD).

It belongs to the SecA family. As to quaternary structure, monomer and homodimer. Part of the essential Sec protein translocation apparatus which comprises SecA, SecYEG and auxiliary proteins SecDF-YajC and YidC. It depends on Zn(2+) as a cofactor.

The protein resides in the cell inner membrane. It localises to the cytoplasm. It catalyses the reaction ATP + H2O + cellular proteinSide 1 = ADP + phosphate + cellular proteinSide 2.. Part of the Sec protein translocase complex. Interacts with the SecYEG preprotein conducting channel. Has a central role in coupling the hydrolysis of ATP to the transfer of proteins into and across the cell membrane, serving both as a receptor for the preprotein-SecB complex and as an ATP-driven molecular motor driving the stepwise translocation of polypeptide chains across the membrane. The polypeptide is Protein translocase subunit SecA (Pseudomonas aeruginosa (strain LESB58)).